A 466-amino-acid polypeptide reads, in one-letter code: ATP synthase subunit beta (466 aa).

ATP is bound at residue 148–155 (GGAGVGKT).

This sequence belongs to the ATPase alpha/beta chains family. F-type ATPases have 2 components, CF(1) - the catalytic core - and CF(0) - the membrane proton channel. CF(1) has five subunits: alpha(3), beta(3), gamma(1), delta(1), epsilon(1). CF(0) has three main subunits: a(1), b(2) and c(9-12). The alpha and beta chains form an alternating ring which encloses part of the gamma chain. CF(1) is attached to CF(0) by a central stalk formed by the gamma and epsilon chains, while a peripheral stalk is formed by the delta and b chains.

The protein localises to the cell inner membrane. The catalysed reaction is ATP + H2O + 4 H(+)(in) = ADP + phosphate + 5 H(+)(out). In terms of biological role, produces ATP from ADP in the presence of a proton gradient across the membrane. The catalytic sites are hosted primarily by the beta subunits. The sequence is that of ATP synthase subunit beta from Xylella fastidiosa (strain M23).